The chain runs to 203 residues: FMN-dependent NADH:quinone oxidoreductase (203 aa).

FMN is bound by residues Ser9, 15–17, and 138–141; these read SVS and SRGG.

This sequence belongs to the azoreductase type 1 family. Homodimer. Requires FMN as cofactor.

The catalysed reaction is 2 a quinone + NADH + H(+) = 2 a 1,4-benzosemiquinone + NAD(+). It carries out the reaction N,N-dimethyl-1,4-phenylenediamine + anthranilate + 2 NAD(+) = 2-(4-dimethylaminophenyl)diazenylbenzoate + 2 NADH + 2 H(+). Functionally, quinone reductase that provides resistance to thiol-specific stress caused by electrophilic quinones. Also exhibits azoreductase activity. Catalyzes the reductive cleavage of the azo bond in aromatic azo compounds to the corresponding amines. The sequence is that of FMN-dependent NADH:quinone oxidoreductase from Methylorubrum extorquens (strain PA1) (Methylobacterium extorquens).